A 556-amino-acid polypeptide reads, in one-letter code: Pumilio homolog 11 (556 aa).

The 342-residue stretch at 215–556 (GGSRELDGSA…RIFSKNLWKK (342 aa)) folds into the PUM-HD domain. Pumilio repeat units lie at residues 238–276 (SMVD…IIFK), 277–313 (EVIN…ILIR), 316–351 (SKPG…SLVK), 353–388 (ALVP…FILE), 389–424 (AATK…KLVD), 425–459 (EISR…VLFE), 460–495 (LRGN…VNEL), and 496–531 (VSVL…SLVE).

The protein localises to the cytoplasm. Functionally, sequence-specific RNA-binding protein that regulates translation and mRNA stability by binding the 3'-UTR of target mRNAs. This is Pumilio homolog 11 (APUM11) from Arabidopsis thaliana (Mouse-ear cress).